The sequence spans 458 residues: MTLLIMITLTSISLLLAAAETIPTTLDGPFKPLTRRFEPSLRRGSDDLPMDHPRLRKRNVSSDFPEQIALALSTPTSMWVSWVTGDAIVGKDVKPLDPSSIASEVWYGKEKGNYMLKKKGNATVYSQLYPSDGLLNYTSGIIHHVLIDGLEPETRYYYRCGDSSVPAMSEEISFETLPLPSKDAYPHRIAFVGDLGLTSNTTTTIDHLMENDPSLVIIVGDLTYANQYRTIGGKGVPCFSCSFPDAPIRETYQPRWDAWGRFMEPLTSKVPTMVIEGNHEIEPQASGITFKSYSERFAVPASESGSNSNLYYSFDAGGVHFVMLGAYVDYNNTGLQYAWLKEDLSKVDRAVTPWLVATMHPPWYNSYSSHYQEFECMRQEMEELLYQYRVDIVFAGHVHAYERMNRIYNYTLDPCGPVYITIGDGGNIEKVDVDFADDPGKCHSSYDLFFFNSLNLSN.

Positions 1–19 are cleaved as a signal peptide; the sequence is MTLLIMITLTSISLLLAAA. Residues Asn59, Asn121, and Asn136 are each glycosylated (N-linked (GlcNAc...) asparagine). Asp194 is a binding site for Fe cation. An N-linked (GlcNAc...) asparagine glycan is attached at Asn200. 2 residues coordinate Fe cation: Asp221 and Tyr224. Asp221 is a binding site for Mn(2+). Asn278 provides a ligand contact to Mn(2+). Asn278 contributes to the substrate binding site. Asn331 carries an N-linked (GlcNAc...) asparagine glycan. His360 contacts Mn(2+). The Proton donor role is filled by His370. His397 provides a ligand contact to Mn(2+). 397-399 provides a ligand contact to substrate; the sequence is HVH. His399 lines the Fe cation pocket. N-linked (GlcNAc...) asparagine glycans are attached at residues Asn409 and Asn455.

Belongs to the metallophosphoesterase superfamily. Purple acid phosphatase family. Homodimer. The cofactor is Fe cation. Mn(2+) serves as cofactor. As to expression, specifically expressed in flowers.

It localises to the secreted. The enzyme catalyses a phosphate monoester + H2O = an alcohol + phosphate. Its function is as follows. Acid phosphatase activity with ATP, ADP, dATP, pyrophosphate, polyphosphate, phosphoserine and phosphothreonine. Low or no activity with phosphotyrosine, AMP and phytate. This is Purple acid phosphatase 23 (PAP23) from Arabidopsis thaliana (Mouse-ear cress).